The sequence spans 866 residues: DNA mismatch repair protein MutS (866 aa).

618 to 625 (GPNMSGKS) lines the ATP pocket.

It belongs to the DNA mismatch repair MutS family.

Its function is as follows. This protein is involved in the repair of mismatches in DNA. It is possible that it carries out the mismatch recognition step. This protein has a weak ATPase activity. The chain is DNA mismatch repair protein MutS from Flavobacterium psychrophilum (strain ATCC 49511 / DSM 21280 / CIP 103535 / JIP02/86).